Reading from the N-terminus, the 144-residue chain is Ribosomal RNA large subunit methyltransferase H (144 aa).

Residues L63, G92, and 111–116 (LSPMTF) contribute to the S-adenosyl-L-methionine site.

Belongs to the RNA methyltransferase RlmH family. In terms of assembly, homodimer.

It is found in the cytoplasm. The enzyme catalyses pseudouridine(1915) in 23S rRNA + S-adenosyl-L-methionine = N(3)-methylpseudouridine(1915) in 23S rRNA + S-adenosyl-L-homocysteine + H(+). Functionally, specifically methylates the pseudouridine at position 1915 (m3Psi1915) in 23S rRNA. This chain is Ribosomal RNA large subunit methyltransferase H, found in Parasynechococcus marenigrum (strain WH8102).